Reading from the N-terminus, the 425-residue chain is E3 ubiquitin-protein ligase TRIM31 (425 aa).

The RING-type zinc-finger motif lies at 16-57; it reads CPICLDILQKPVTIDCGHNFCLKCITQIGETSCGFFKCPLCK. The B box-type zinc finger occupies 90 to 131; the sequence is RKEATCPRHQEMFHYFCEDDGKFLCFVCRESKDHKSHNVSLI. Residues cysteine 95, histidine 98, cysteine 117, and histidine 123 each contribute to the Zn(2+) site. Coiled coils occupy residues 126–162 and 270–307; these read HNVS…VKAQ and LELE…DENR. Positions 328–360 are disordered; that stretch reads HKMNKTSEPGSSSAGGRTTSGPPNHHSSAPSHS. The span at 336 to 360 shows a compositional bias: low complexity; the sequence is PGSSSAGGRTTSGPPNHHSSAPSHS.

It belongs to the TRIM/RBCC family. May form oligomers. Interacts with isoform p52shc of SHC1. Post-translationally, auto-ubiquitinated (in vitro). As to expression, up-regulated in gastric adenocarcinomas.

The protein resides in the cytoplasm. Its subcellular location is the mitochondrion. It carries out the reaction S-ubiquitinyl-[E2 ubiquitin-conjugating enzyme]-L-cysteine + [acceptor protein]-L-lysine = [E2 ubiquitin-conjugating enzyme]-L-cysteine + N(6)-ubiquitinyl-[acceptor protein]-L-lysine.. It functions in the pathway protein modification; protein ubiquitination. In terms of biological role, E3 ubiquitin-protein ligase that acts as a regulator of antiviral immune response and inflammation by mediating ubiquitination of substrates. Acts as a regulator of innate immune defense against viruses by mediating 'Lys-63'-linked ubiquitination of MAVS, promoting MAVS polymerization and formation of three-stranded helical filaments on mitochondria. Acts as a negative regulator of the NLRP3 inflammasome by catalyzing 'Lys-48'-linked ubiquitination of NLRP3, leading to its degradation. Regulator of Src-induced anchorage independent cell growth. This is E3 ubiquitin-protein ligase TRIM31 from Homo sapiens (Human).